A 184-amino-acid chain; its full sequence is Oligoribonuclease (184 aa).

Residues 10–172 (LVWVDCEMTG…ADVLESIAEL (163 aa)) enclose the Exonuclease domain. Residue tyrosine 129 is part of the active site.

This sequence belongs to the oligoribonuclease family.

It localises to the cytoplasm. Functionally, 3'-to-5' exoribonuclease specific for small oligoribonucleotides. The protein is Oligoribonuclease of Tropheryma whipplei (strain Twist) (Whipple's bacillus).